We begin with the raw amino-acid sequence, 272 residues long: Phosphatidylglycerol--prolipoprotein diacylglyceryl transferase (272 aa).

A run of 3 helical transmembrane segments spans residues 19–39 (ISIR…YFLV), 58–78 (LNTV…VVFY), and 94–114 (WHGG…GLIF). R141 is an a 1,2-diacyl-sn-glycero-3-phospho-(1'-sn-glycerol) binding site. A run of 2 helical transmembrane segments spans residues 207–227 (GTIL…IENF) and 234–254 (LGFI…MILC).

This sequence belongs to the Lgt family.

It localises to the cell inner membrane. The catalysed reaction is L-cysteinyl-[prolipoprotein] + a 1,2-diacyl-sn-glycero-3-phospho-(1'-sn-glycerol) = an S-1,2-diacyl-sn-glyceryl-L-cysteinyl-[prolipoprotein] + sn-glycerol 1-phosphate + H(+). Its pathway is protein modification; lipoprotein biosynthesis (diacylglyceryl transfer). Functionally, catalyzes the transfer of the diacylglyceryl group from phosphatidylglycerol to the sulfhydryl group of the N-terminal cysteine of a prolipoprotein, the first step in the formation of mature lipoproteins. The polypeptide is Phosphatidylglycerol--prolipoprotein diacylglyceryl transferase (Desulfotalea psychrophila (strain LSv54 / DSM 12343)).